We begin with the raw amino-acid sequence, 441 residues long: Ribosomal protein uS12 methylthiotransferase RimO (441 aa).

The MTTase N-terminal domain maps to 8-118 (PKIGFVSLGC…VLQHVHHYVP (111 aa)). Residues Cys17, Cys53, Cys82, Cys150, Cys154, and Cys157 each coordinate [4Fe-4S] cluster. Residues 136–373 (LTPRHYAYLK…MQLQQQISAE (238 aa)) enclose the Radical SAM core domain. One can recognise a TRAM domain in the interval 376 to 441 (QEKVGREILV…DEYDLWGSRV (66 aa)).

Belongs to the methylthiotransferase family. RimO subfamily. The cofactor is [4Fe-4S] cluster.

Its subcellular location is the cytoplasm. It catalyses the reaction L-aspartate(89)-[ribosomal protein uS12]-hydrogen + (sulfur carrier)-SH + AH2 + 2 S-adenosyl-L-methionine = 3-methylsulfanyl-L-aspartate(89)-[ribosomal protein uS12]-hydrogen + (sulfur carrier)-H + 5'-deoxyadenosine + L-methionine + A + S-adenosyl-L-homocysteine + 2 H(+). Functionally, catalyzes the methylthiolation of an aspartic acid residue of ribosomal protein uS12. The chain is Ribosomal protein uS12 methylthiotransferase RimO from Salmonella heidelberg (strain SL476).